The chain runs to 286 residues: uncharacterized protein (286 aa).

The segment at residues 1–31 (MKKMSRRQFLKGMFGALAAGALTAGGGYGYA) is a signal peptide (tat-type signal). Residues D65, H67, D97, N130, H221, and H223 each contribute to the a divalent metal cation site.

The protein belongs to the metallophosphoesterase superfamily. Requires a divalent metal cation as cofactor. Predicted to be exported by the Tat system. The position of the signal peptide cleavage has not been experimentally proven.

This is an uncharacterized protein from Bacillus subtilis (strain 168).